The sequence spans 581 residues: Frizzled-3 (581 aa).

The N-terminal stretch at 1-19 (MYAASILILHLTWAVATIA) is a signal peptide. Topologically, residues 20–237 (ANGAGHNGPV…TSSQKKTSET (218 aa)) are extracellular. The 122-residue stretch at 35–156 (PNGLQCQPIA…PEKHELCMQI (122 aa)) folds into the FZ domain. 5 disulfides stabilise this stretch: C40–C101, C48–C94, C85–C123, C112–C153, and C116–C141. N54 is a glycosylation site (N-linked (GlcNAc...) asparagine). The N-linked (GlcNAc...) asparagine glycan is linked to N206. Residues 238-258 (LILGLSAVCFVLTLFALVTFW) traverse the membrane as a helical segment. Topologically, residues 259-270 (AEPTRFGYPERP) are cytoplasmic. The helical transmembrane segment at 271-291 (VLFLCLCYNLFSVCYLERIVF) threads the bilayer. At 292–321 (HNQARMHDVELQGRLMRPGCLLTPPCLASY) the chain is on the extracellular side. The helical transmembrane segment at 322-342 (ITTSYLSLCAASWWLIFALCF) threads the bilayer. The Cytoplasmic segment spans residues 343–359 (YLSSHKKWSSEALEKRS). The chain crosses the membrane as a helical span at residues 360 to 380 (GLFHVLAWVPPLAPPIAALLL). The Extracellular segment spans residues 381–393 (EKVRPSELTGMCY). Residues 394-414 (APGFVELPALVLLLLGLYFTL) form a helical membrane-spanning segment. Topologically, residues 415 to 442 (RASRSLLSLQQQLQPTLAHHRFGQIRKR) are cytoplasmic. The chain crosses the membrane as a helical span at residues 443–463 (FVLFSLLYFAPTTAGVVAALC). Over 464–488 (ERYADSVPSCSTPDDCLSPTPLSAW) the chain is Extracellular. Residues 489-509 (PALVRIFFQLVGGTLTGLWVW) form a helical membrane-spanning segment. Over 510–581 (SRKTCESYRN…PVYNPNQSRV (72 aa)) the chain is Cytoplasmic. Positions 579-581 (SRV) match the PDZ-binding motif.

Belongs to the G-protein coupled receptor Fz/Smo family. In terms of tissue distribution, wing, leg and eye imaginal disks. In embryos, expressed is seen in brain, proventriculus, Malpighian tubules, anal plate and visceral mesoderm of parasegment 8.

Its subcellular location is the membrane. Functionally, receptor for Wnt proteins. Most of frizzled receptors are coupled to the beta-catenin canonical signaling pathway, which leads to the activation of disheveled proteins, inhibition of GSK-3 kinase, nuclear accumulation of beta-catenin and activation of Wnt target genes. A second signaling pathway involving PKC and calcium fluxes has been seen for some family members, but it is not yet clear if it represents a distinct pathway or if it can be integrated in the canonical pathway, as PKC seems to be required for Wnt-mediated inactivation of GSK-3 kinase. Both pathways seem to involve interactions with G-proteins. Required to coordinate the cytoskeletons of epidermal cells to produce a parallel array of cuticular hairs and bristles. The polypeptide is Frizzled-3 (fz3) (Drosophila melanogaster (Fruit fly)).